The chain runs to 979 residues: Protocadherin alpha-9 (979 aa).

The signal sequence occupies residues 1–59 (MRLGNRPEDIRTCVHLRWHIHGLLRQENASVVISKCLRHGAWRLLLWLLLLATWDVGSG). Topologically, residues 60–726 (QLHYSVPEEA…RREASLMDVN (667 aa)) are extracellular. 6 consecutive Cadherin domains span residues 64 to 163 (SVPE…PPIF), 164 to 272 (SVAE…APVF), 273 to 380 (DRSV…APEI), 381 to 485 (VLTS…APAF), 486 to 595 (AHPE…PPTL), and 611 to 707 (VSRS…VPKA). Asparagine 287 and asparagine 295 each carry an N-linked (GlcNAc...) asparagine glycan. Residue asparagine 578 is glycosylated (N-linked (GlcNAc...) asparagine). Residues 727–747 (VYLIIAICAVSSLLVLTLLLY) form a helical membrane-spanning segment. At 748-979 (TALRCSAVPM…GNSTTDNSDQ (232 aa)) the chain is on the cytoplasmic side. 5 PXXP repeats span residues 763–766 (LGKP), 828–831 (PRQP), 861–864 (PGGP), 902–905 (PGNP), and 920–923 (PGSP). The segment at 763–923 (LGKPTLVCSS…PDKFIIPGSP (161 aa)) is 5 X 4 AA repeats of P-X-X-P. A disordered region spans residues 859–979 (AGPGGPDQQW…GNSTTDNSDQ (121 aa)). Basic and acidic residues predominate over residues 938–952 (DKSDFITFGKKEETK).

It is found in the cell membrane. Potential calcium-dependent cell-adhesion protein. May be involved in the establishment and maintenance of specific neuronal connections in the brain. This Mus musculus (Mouse) protein is Protocadherin alpha-9.